Consider the following 266-residue polypeptide: Undecaprenyl-diphosphatase (266 aa).

Transmembrane regions (helical) follow at residues 1 to 21 (MDTFQVIILALIQGLTEFLPI), 39 to 59 (QGLSFDVAVNTGSLLAVVMYF), 87 to 107 (WWIILATIPAVIVGFSAKGFI), 111 to 131 (FRSIEVIAATTIIFGLLLWWA), 144 to 164 (VGWKKALVIGIAQAMALIPGT), 183 to 203 (AAARFSFLMSVPVSLGAAILV), 218 to 238 (ALGLGIVVSFIAAYICIHYFL), and 246 to 266 (MTPFVVYRLALGAVLCGFIFL).

This sequence belongs to the UppP family.

It localises to the cell inner membrane. It carries out the reaction di-trans,octa-cis-undecaprenyl diphosphate + H2O = di-trans,octa-cis-undecaprenyl phosphate + phosphate + H(+). Functionally, catalyzes the dephosphorylation of undecaprenyl diphosphate (UPP). Confers resistance to bacitracin. This Shewanella halifaxensis (strain HAW-EB4) protein is Undecaprenyl-diphosphatase.